A 272-amino-acid chain; its full sequence is Tropinone reductase-like 1 (272 aa).

17–41 serves as a coordination point for NAD(+); it reads IITGGASGIGACTAELFHENGAKVV. A substrate-binding site is contributed by serine 150. Tyrosine 163 serves as the catalytic Proton acceptor.

It belongs to the short-chain dehydrogenases/reductases (SDR) family.

Functionally, has no tropinone reductase activity. The protein is Tropinone reductase-like 1 of Erythroxylum coca (Coca plant).